We begin with the raw amino-acid sequence, 236 residues long: Phosphoribosylaminoimidazole-succinocarboxamide synthase (236 aa).

It belongs to the SAICAR synthetase family.

The enzyme catalyses 5-amino-1-(5-phospho-D-ribosyl)imidazole-4-carboxylate + L-aspartate + ATP = (2S)-2-[5-amino-1-(5-phospho-beta-D-ribosyl)imidazole-4-carboxamido]succinate + ADP + phosphate + 2 H(+). The protein operates within purine metabolism; IMP biosynthesis via de novo pathway; 5-amino-1-(5-phospho-D-ribosyl)imidazole-4-carboxamide from 5-amino-1-(5-phospho-D-ribosyl)imidazole-4-carboxylate: step 1/2. This chain is Phosphoribosylaminoimidazole-succinocarboxamide synthase, found in Pseudomonas putida (strain GB-1).